Reading from the N-terminus, the 327-residue chain is MVKKIGVLTSGGDAPGMNAAIRGVVRAALSAGLDVFGIEDGYLGLYENRMKKLDRYSVSDMINRGGTFLGSARFPEFRDPEVRKVALKNMHERGIDGLVVIGGDGSYAGADLLTKEGGIHCVGLPGTIDNDVAGTDYTIGFFTALETVVEAIDRLRDTSSSHQRISIVEVMGRYCGDLTLAAAIAGGCEFIAIPEVEFKRDDLVAEIKAGIAKGKKHAIVAITEKLDDIDSLAKYIEKETGRETRGTVLGHIQRGGAPVAYDRILASRMGAYAVDLLLQDHDYKKGGFCVGVQNEKMVHELISVCIAPENKKSKFKEDWYDTAKKLF.

G12 provides a ligand contact to ATP. ADP is bound by residues R22 to R26 and R55 to D60. ATP-binding positions include R73–F74 and G103–S106. A Mg(2+)-binding site is contributed by D104. Position 127-129 (T127–D129) interacts with substrate. D129 (proton acceptor) is an active-site residue. Position 156 (R156) interacts with ADP. Residues R164 and M171–R173 contribute to the substrate site. ADP contacts are provided by residues G187–E189, K213, and K215–H217. Substrate contacts are provided by residues E224, R245, and H251–R254.

Belongs to the phosphofructokinase type A (PFKA) family. ATP-dependent PFK group I subfamily. Prokaryotic clade 'B1' sub-subfamily. In terms of assembly, homotetramer. Mg(2+) is required as a cofactor.

It localises to the cytoplasm. The catalysed reaction is beta-D-fructose 6-phosphate + ATP = beta-D-fructose 1,6-bisphosphate + ADP + H(+). It participates in carbohydrate degradation; glycolysis; D-glyceraldehyde 3-phosphate and glycerone phosphate from D-glucose: step 3/4. Allosterically activated by ADP and other diphosphonucleosides, and allosterically inhibited by phosphoenolpyruvate. Catalyzes the phosphorylation of D-fructose 6-phosphate to fructose 1,6-bisphosphate by ATP, the first committing step of glycolysis. In Yersinia pseudotuberculosis serotype O:1b (strain IP 31758), this protein is ATP-dependent 6-phosphofructokinase.